A 383-amino-acid polypeptide reads, in one-letter code: Neuropeptide Y receptor type 1 (383 aa).

At 1 to 44 (MNSTSFSQVENHSIYYNFSEKNSRFLAFENDDCHLPLAMIFTLA) the chain is on the extracellular side. N2, N11, and N17 each carry an N-linked (GlcNAc...) asparagine glycan. The chain crosses the membrane as a helical span at residues 45–65 (LAYGAVIILGVSGNLALIIII). Residues 66–76 (LKQKEMRNVTN) lie on the Cytoplasmic side of the membrane. Residues 77–97 (ILIVNLSFSDLLVAIMCLPFT) traverse the membrane as a helical segment. Residues 98 to 116 (FVYTLMDHWVFGEAMCKLN) are Extracellular-facing. C113 and C198 are disulfide-bonded. Residues 117–137 (PFVQCVSITVSIFSLVLIAVE) traverse the membrane as a helical segment. The Cytoplasmic segment spans residues 138-154 (RHQLIINPRGWRPNNRH). The chain crosses the membrane as a helical span at residues 155–175 (AYVGIAVIWVLAVASSLPFLI). Topologically, residues 176 to 211 (YQVLTDEPFQNVTLDAFKDKYVCFDKFPSDSHRLSY) are extracellular. N-linked (GlcNAc...) asparagine glycosylation occurs at N186. Residues 212–232 (TTLLLVLQYFGPLCFIFICYF) form a helical membrane-spanning segment. Topologically, residues 233 to 260 (KIYVRLKRRNSMMDKMRDNKYRSSEAKR) are cytoplasmic. A helical membrane pass occupies residues 261 to 281 (INIMLLSIVVAFAVCWLPLTI). Residues 282-299 (FNTVFDWDHQIIATCNHN) are Extracellular-facing. Residues 300–320 (LLFLLCHLTAMISTCVNPIFY) form a helical membrane-spanning segment. The Cytoplasmic segment spans residues 321–383 (GFLNKNFQRD…KIHTDDNEKI (63 aa)). C338 carries S-palmitoyl cysteine lipidation. At S368 the chain carries Phosphoserine.

This sequence belongs to the G-protein coupled receptor 1 family.

Its subcellular location is the cell membrane. In terms of biological role, receptor for neuropeptide Y and peptide YY. This is Neuropeptide Y receptor type 1 (NPY1R) from Bos taurus (Bovine).